A 1295-amino-acid chain; its full sequence is Phosphoribosylformylglycinamidine synthase (1295 aa).

Residues 305–327 (WPGAATGSGGEIRDEGATGRGAK) form a disordered region. ATP-binding positions include 307–318 (GAATGSGGEIRD) and A678. Residues E718, N722, and D884 each contribute to the Mg(2+) site. An ATP-binding site is contributed by S886. In terms of domain architecture, Glutamine amidotransferase type-1 spans 1042–1295 (VAVLREQGVN…IFRNARKQLG (254 aa)). The active-site Nucleophile is the C1135. Active-site residues include H1260 and E1262.

In the N-terminal section; belongs to the FGAMS family. Monomer.

The protein resides in the cytoplasm. It catalyses the reaction N(2)-formyl-N(1)-(5-phospho-beta-D-ribosyl)glycinamide + L-glutamine + ATP + H2O = 2-formamido-N(1)-(5-O-phospho-beta-D-ribosyl)acetamidine + L-glutamate + ADP + phosphate + H(+). Its pathway is purine metabolism; IMP biosynthesis via de novo pathway; 5-amino-1-(5-phospho-D-ribosyl)imidazole from N(2)-formyl-N(1)-(5-phospho-D-ribosyl)glycinamide: step 1/2. Functionally, phosphoribosylformylglycinamidine synthase involved in the purines biosynthetic pathway. Catalyzes the ATP-dependent conversion of formylglycinamide ribonucleotide (FGAR) and glutamine to yield formylglycinamidine ribonucleotide (FGAM) and glutamate. This chain is Phosphoribosylformylglycinamidine synthase, found in Shigella boydii serotype 4 (strain Sb227).